A 310-amino-acid polypeptide reads, in one-letter code: Probable GTP 3',8-cyclase (310 aa).

A Radical SAM core domain is found at 5–232; it reads RFGRPVTNLR…RRRKYFIPID (228 aa). R14 is a GTP binding site. Residues C21 and C25 each contribute to the [4Fe-4S] cluster site. Y27 contacts S-adenosyl-L-methionine. Residue C28 participates in [4Fe-4S] cluster binding. K61 contacts GTP. Residue G65 coordinates S-adenosyl-L-methionine. Residue T90 coordinates GTP. Residue S114 participates in S-adenosyl-L-methionine binding. A GTP-binding site is contributed by K150. M189 is a binding site for S-adenosyl-L-methionine. [4Fe-4S] cluster contacts are provided by C250 and C253. 255–257 contacts GTP; sequence RLR. C267 provides a ligand contact to [4Fe-4S] cluster.

This sequence belongs to the radical SAM superfamily. MoaA family. [4Fe-4S] cluster is required as a cofactor.

The enzyme catalyses GTP + AH2 + S-adenosyl-L-methionine = (8S)-3',8-cyclo-7,8-dihydroguanosine 5'-triphosphate + 5'-deoxyadenosine + L-methionine + A + H(+). Its pathway is cofactor biosynthesis; molybdopterin biosynthesis. In terms of biological role, catalyzes the cyclization of GTP to (8S)-3',8-cyclo-7,8-dihydroguanosine 5'-triphosphate. This chain is Probable GTP 3',8-cyclase, found in Pyrococcus horikoshii (strain ATCC 700860 / DSM 12428 / JCM 9974 / NBRC 100139 / OT-3).